A 1403-amino-acid chain; its full sequence is Mannuronan C5-epimerase AlgE1 (1403 aa).

PbH1 repeat units follow at residues 133–155, 157–179, 180–202, 204–226, 257–279, 280–302, and 320–359; these read DRDVTLERVEIREMSGYGFDPHE, TINLTIRDSVAHDNSLDGFVADY, QVGGVFENNVSYNNDRHGFNIVT, TNDFVLSNNVAYGNGGAGLVVQR, AHDVTLQNAEIYGNGLYGVRVYG, AQDVQILDNQIHDNSQNGAYAEV, and TTGTWLEGNVISGSANSTYGIQERADGTDYSSLYANSIDG. Disordered regions lie at residues 372–395 and 408–428; these read STVSSQSGSGQQATLEGSAGNDAL and AGDDRLNGDAGNDILDGGAGR. Hemolysin-type calcium-binding repeat units follow at residues 388 to 403, 406 to 422, 424 to 440, 557 to 573, 574 to 591, 697 to 712, 716 to 732, and 734 to 750; these read GSAGNDALSGTEAHET, GQAGDDRLNGDAGNDIL, GGAGRDNLTGGAGADTF, GYGGNDTLNGGAGDDIL, VGGAGRDSLTGGAGADVF, EGTDGNDTLQGTEANE, GLDGRDNLNGGAGDDIL, and GGAGRDTLTGGTGADTF. PbH1 repeat units lie at residues 977–999, 1001–1023, 1024–1046, 1048–1070, 1101–1123, 1124–1146, 1163–1185, and 1190–1212; these read DRNVTIERVEIREMSGYGFDPHE, TINLTIRDSVAHDNGLDGFVADY, LVDSVFENNVAYNNDRHGFNIVT, TYDFVMTNNVAYGNGGAGLTIQR, TNNVTLQNAEIYGNGSSGVRLYG, TEDVQILDNQIHDNSQNGTYPEV, TLNTRIEGNLIDASDNANYAVRE, and SDYTTLVDNDISGGQVASVQLSG. 3 Hemolysin-type calcium-binding repeats span residues 1227–1243, 1244–1261, and 1263–1279; these read GTDGNDVLVGSDANDQL, YGGAGDDRLDGGAGDDLL, and GGAGRDDLTGGTGADTF.

This sequence belongs to the D-mannuronate C5-epimerase family. Requires Ca(2+) as cofactor.

Its subcellular location is the secreted. The enzyme catalyses [(1-&gt;4)-beta-D-mannuronosyl](n) = [alginate](n). Its pathway is glycan biosynthesis; alginate biosynthesis. With respect to regulation, inhibited by zinc. Functionally, converts beta-D-mannuronic acid (M) to alpha-L-guluronic acid (G), producing a polymer with gel-forming capacity, required for the formation of the cyst coat. The sequence is that of Mannuronan C5-epimerase AlgE1 from Azotobacter vinelandii.